The primary structure comprises 711 residues: C-Jun-amino-terminal kinase-interacting protein 1 (711 aa).

Residues 1-27 (MAERESGGLGGGAASPPAASPFLGLHI) form a disordered region. The span at 14–25 (ASPPAASPFLGL) shows a compositional bias: low complexity. Phosphoserine is present on residues Ser-15, Ser-29, and Ser-40. The segment at 78–371 (AGGGGAGSRL…PPRASLSSDT (294 aa)) is disordered. Phosphothreonine; by MAPK8, MAPK9 and MAPK10 is present on Thr-103. The span at 105–116 (GAEDDEEDDDEE) shows a compositional bias: acidic residues. The tract at residues 127-285 (PKAESGQEPA…EATEEIYLTP (159 aa)) is JNK-binding domain (JBD). Over residues 139–149 (GQGQSQGQSQG) the composition is skewed to low complexity. Ser-152 is modified (phosphoserine). Positions 157–176 (RPKRPTTLNLFPQVPRSQDT) are minimal inhibitory domain (MID). The segment covering 162–182 (TTLNLFPQVPRSQDTLNNNSL) has biased composition (polar residues). Residues Ser-181, Ser-187, Ser-193, Ser-195, and Ser-196 each carry the phosphoserine modification. Residues 194–204 (RSSSPLKTGEQ) are compositionally biased toward polar residues. Residue Thr-205 is modified to Phosphothreonine; by MAPK8, MAPK9 and MAPK10. Ser-214 bears the Phosphoserine mark. Residues 228-244 (DRGTSTDSPCRRSTATQ) are compositionally biased toward polar residues. Positions 267–277 (IHYQADVRLEA) are enriched in basic and acidic residues. Residues 283 to 471 (LTPVQRPPDA…NVFMSGRSRS (189 aa)) are interaction with MAP3K7. 9 positions are modified to phosphoserine: Ser-311, Ser-328, Ser-330, Ser-340, Ser-355, Ser-366, Ser-369, Ser-407, and Ser-409. 2 short sequence motifs (D-box) span residues 353–360 (RGSLGEPP) and 364–372 (RASLSSDTS). At Thr-411 the chain carries Phosphothreonine. A disordered region spans residues 429–451 (EEYEEAPRPQPPACLSEDSTPDE). Residues Ser-444 and Ser-447 each carry the phosphoserine modification. Thr-448 is subject to Phosphothreonine. 4 positions are modified to phosphoserine: Ser-469, Ser-471, Ser-472, and Ser-473. The tract at residues 471–660 (SSSAESFGLF…PKNNKYFGFI (190 aa)) is interaction with VRK2. Positions 488 to 549 (EQEQTHRAIF…PAYYAIEVTK (62 aa)) constitute an SH3 domain. Residues 561 to 700 (SDWVDQFRVK…FQQFYKQFVE (140 aa)) form the PID domain.

It belongs to the JIP scaffold family. In terms of assembly, forms homo- or heterooligomeric complexes. Binds specific components of the JNK signaling pathway namely, MAPK8/JNK1, MAPK9/JNK2, MAPK10/JNK3, MAP2K7/MKK7, MAP3K11/MLK3 and DLK1. Also binds the proline-rich domain-containing splice variant of apolipoprotein E receptor 2 (ApoER2). Interacts, via the PID domain, with ARHGEF28. Binds the cytoplasmic tails of LRP1 and LRP2 (Megalin). Binds the TPR motif-containing C-terminal of KNS2, then the pre-assembled MAPK8IP1 scaffolding complexes are transported as a cargo of kinesin, to the required subcellular location. Interacts with the cytoplasmic domain of APP. Interacts with DCLK2. Interacts with MAP3K7/TAK1. Interacts with isoform 1 and isoform 2 of VRK2. Found in a complex with SH3RF1, RAC1, MAP3K11/MLK3, MAP2K7/MKK7 and MAPK8/JNK1. Found in a complex with SH3RF1, RAC2, MAP3K7/TAK1, MAP2K7/MKK7, MAPK8/JNK1 and MAPK9/JNK2. Interacts with SH3RF2. In terms of processing, phosphorylated by MAPK8, MAPK9 and MAPK10. Phosphorylation on Thr-103 is also necessary for the dissociation and activation of MAP3K12. Phosphorylated by isoform 1 and isoform 2 of VRK2. Hyperphosphorylated during mitosis following activation of stress-activated and MAP kinases. Ubiquitinated. Two preliminary events are required to prime for ubiquitination; phosphorylation and an increased in intracellular calcium concentration. Then, the calcium influx initiates ubiquitination and degradation by the ubiquitin-proteasome pathway. In terms of tissue distribution, highly expressed in brain. Expressed in neurons, localizing to neurite tips in differentiating cells. Also expressed in the pancreas, testis and prostate. Low levels in heart, ovary and small intestine. Decreased levels in pancreatic beta cells sensitize cells to IL-1-beta-induced apoptosis.

It is found in the cytoplasm. The protein resides in the perinuclear region. Its subcellular location is the nucleus. The protein localises to the endoplasmic reticulum membrane. It localises to the mitochondrion membrane. In terms of biological role, the JNK-interacting protein (JIP) group of scaffold proteins selectively mediates JNK signaling by aggregating specific components of the MAPK cascade to form a functional JNK signaling module. Required for JNK activation in response to excitotoxic stress. Cytoplasmic MAPK8IP1 causes inhibition of JNK-regulated activity by retaining JNK in the cytoplasm and inhibiting JNK phosphorylation of c-Jun. May also participate in ApoER2-specific reelin signaling. Directly, or indirectly, regulates GLUT2 gene expression and beta-cell function. Appears to have a role in cell signaling in mature and developing nerve terminals. May function as a regulator of vesicle transport, through interactions with the JNK-signaling components and motor proteins. Functions as an anti-apoptotic protein and whose level seems to influence the beta-cell death or survival response. Acts as a scaffold protein that coordinates with SH3RF1 in organizing different components of the JNK pathway, including RAC1 or RAC2, MAP3K11/MLK3 or MAP3K7/TAK1, MAP2K7/MKK7, MAPK8/JNK1 and/or MAPK9/JNK2 into a functional multiprotein complex to ensure the effective activation of the JNK signaling pathway. Regulates the activation of MAPK8/JNK1 and differentiation of CD8(+) T-cells. This chain is C-Jun-amino-terminal kinase-interacting protein 1 (MAPK8IP1), found in Homo sapiens (Human).